A 248-amino-acid polypeptide reads, in one-letter code: ATP synthase subunit a, chloroplastic (248 aa).

5 helical membrane passes run Ala37–Thr57, Val96–Phe116, Ile135–His155, Leu200–Leu220, and Gly221–Gly241.

It belongs to the ATPase A chain family. In terms of assembly, F-type ATPases have 2 components, CF(1) - the catalytic core - and CF(0) - the membrane proton channel. CF(1) has five subunits: alpha(3), beta(3), gamma(1), delta(1), epsilon(1). CF(0) has four main subunits: a, b, b' and c.

It is found in the plastid. The protein localises to the chloroplast thylakoid membrane. In terms of biological role, key component of the proton channel; it plays a direct role in the translocation of protons across the membrane. This is ATP synthase subunit a, chloroplastic from Psilotum nudum (Whisk fern).